A 284-amino-acid polypeptide reads, in one-letter code: Putative mitochondrial carrier protein PET8 (284 aa).

Solcar repeat units lie at residues 2–75 (NTFF…MKVK), 92–178 (IDTT…LKKT), and 192–271 (KGAI…VHSL). Transmembrane regions (helical) follow at residues 5 to 25 (FLSL…FFPI), 50 to 70 (GLGS…ISYD), 98 to 118 (MLSS…AEVV), 153 to 169 (GWST…CIQF), 194 to 214 (AICG…LDFL), and 252 to 272 (MWIS…HSLL).

This sequence belongs to the mitochondrial carrier (TC 2.A.29) family.

The protein resides in the mitochondrion inner membrane. This Saccharomyces cerevisiae (strain ATCC 204508 / S288c) (Baker's yeast) protein is Putative mitochondrial carrier protein PET8 (PET8).